The primary structure comprises 619 residues: Very-long-chain aldehyde decarbonylase GL1-4 (619 aa).

Transmembrane regions (helical) follow at residues isoleucine 45–isoleucine 65, glycine 94–proline 114, glycine 126–histidine 146, phenylalanine 178–leucine 198, and alanine 325–tyrosine 345. One can recognise a Fatty acid hydroxylase domain in the interval valine 138–threonine 272.

Belongs to the sterol desaturase family. In terms of assembly, homodimer.

The protein localises to the endoplasmic reticulum membrane. It catalyses the reaction a long-chain fatty aldehyde + 2 NADPH + O2 + H(+) = a long-chain alkane + formate + 2 NADP(+) + H2O. Aldehyde decarbonylase involved in the conversion of aldehydes to alkanes. Core component of a very-long-chain alkane synthesis complex. This chain is Very-long-chain aldehyde decarbonylase GL1-4, found in Oryza sativa subsp. indica (Rice).